The primary structure comprises 509 residues: GMP synthase [glutamine-hydrolyzing] (509 aa).

In terms of domain architecture, Glutamine amidotransferase type-1 spans 4–193 (NVLILDFGSQ…LVKIAQVPQN (190 aa)). C79 acts as the Nucleophile in catalysis. Catalysis depends on residues H167 and E169. Positions 194–384 (FTPNAFVSDM…LGIDAELLGR (191 aa)) constitute a GMPS ATP-PPase domain. An ATP-binding site is contributed by 221 to 227 (SGGVDST).

Homodimer.

It carries out the reaction XMP + L-glutamine + ATP + H2O = GMP + L-glutamate + AMP + diphosphate + 2 H(+). It functions in the pathway purine metabolism; GMP biosynthesis; GMP from XMP (L-Gln route): step 1/1. In terms of biological role, catalyzes the synthesis of GMP from XMP. In Flavobacterium psychrophilum (strain ATCC 49511 / DSM 21280 / CIP 103535 / JIP02/86), this protein is GMP synthase [glutamine-hydrolyzing].